The chain runs to 707 residues: Translation initiation factor IF-2 (707 aa).

Over residues Leu55–Lys80 the composition is skewed to basic and acidic residues. The segment at Leu55 to Tyr88 is disordered. The tr-type G domain occupies Pro209–Lys378. Residues Gly218–Thr225 are G1. Gly218–Thr225 contacts GTP. Residues Gly243–His247 form a G2 region. The tract at residues Asp264–Gly267 is G3. GTP contacts are provided by residues Asp264–His268 and Asn318–Asp321. A G4 region spans residues Asn318–Asp321. A G5 region spans residues Ser354–Lys356.

It belongs to the TRAFAC class translation factor GTPase superfamily. Classic translation factor GTPase family. IF-2 subfamily.

The protein resides in the cytoplasm. One of the essential components for the initiation of protein synthesis. Protects formylmethionyl-tRNA from spontaneous hydrolysis and promotes its binding to the 30S ribosomal subunits. Also involved in the hydrolysis of GTP during the formation of the 70S ribosomal complex. This chain is Translation initiation factor IF-2, found in Caldanaerobacter subterraneus subsp. tengcongensis (strain DSM 15242 / JCM 11007 / NBRC 100824 / MB4) (Thermoanaerobacter tengcongensis).